Reading from the N-terminus, the 152-residue chain is Ribosome maturation factor RimP (152 aa).

Belongs to the RimP family.

It is found in the cytoplasm. Functionally, required for maturation of 30S ribosomal subunits. The polypeptide is Ribosome maturation factor RimP (Yersinia pestis).